Here is a 408-residue protein sequence, read N- to C-terminus: MKIYLVGGAVRDSLLELPIKDRDYMVVGATPEQMLAQGYKQVGKDFPVFLHPKTQQEYALARTERKTAAGYGGFSVDAAPNVTLEQDLLRRDLTINAIAQDDQGNRYDPFNGIADLNARLLRHVSDAFIEDPLRVLRVARFAARFHSLGFNIAAETMALMTKISQSGELEALTAERVYIELDKSLTSDAPQVFFSVLKECGALAVLFPEIDALFGIPQPEQWHPEIDSGVHTLMVLEQAAKLSNDNAVRFASLVHDLGKALSPKASLPKHHGHGQKGLPLIKALCERFRVPNEYRDLALLVSDQHQNIHNAHELRADTIVKLFDKADFWRKPHRLEQLLLSCEADAKGRTGFELSPYPQASYIQQCFKAASNVSVKDIIDAGYKGAEIRQQLTSSRVEAVQEIKLNLE.

Gly8 and Arg11 together coordinate ATP. CTP contacts are provided by Gly8 and Arg11. The Mg(2+) site is built by Asp21 and Asp23. Arg91, Arg137, and Arg140 together coordinate ATP. The CTP site is built by Arg91, Arg137, and Arg140. Residues 228 to 329 (SGVHTLMVLE…VKLFDKADFW (102 aa)) enclose the HD domain.

Belongs to the tRNA nucleotidyltransferase/poly(A) polymerase family. Bacterial CCA-adding enzyme type 1 subfamily. In terms of assembly, monomer. Can also form homodimers and oligomers. Requires Mg(2+) as cofactor. It depends on Ni(2+) as a cofactor.

The enzyme catalyses a tRNA precursor + 2 CTP + ATP = a tRNA with a 3' CCA end + 3 diphosphate. The catalysed reaction is a tRNA with a 3' CCA end + 2 CTP + ATP = a tRNA with a 3' CCACCA end + 3 diphosphate. Catalyzes the addition and repair of the essential 3'-terminal CCA sequence in tRNAs without using a nucleic acid template. Adds these three nucleotides in the order of C, C, and A to the tRNA nucleotide-73, using CTP and ATP as substrates and producing inorganic pyrophosphate. tRNA 3'-terminal CCA addition is required both for tRNA processing and repair. Also involved in tRNA surveillance by mediating tandem CCA addition to generate a CCACCA at the 3' terminus of unstable tRNAs. While stable tRNAs receive only 3'-terminal CCA, unstable tRNAs are marked with CCACCA and rapidly degraded. The polypeptide is Multifunctional CCA protein (Shewanella piezotolerans (strain WP3 / JCM 13877)).